A 620-amino-acid polypeptide reads, in one-letter code: Kelch-like protein 32 (620 aa).

One can recognise a BTB domain in the interval 42 to 109; it reads CDITLIAEEQ…AYTGQILLEP (68 aa). Kelch repeat units lie at residues 290 to 346, 347 to 398, 399 to 446, 447 to 494, 496 to 547, and 549 to 599; these read TLYI…VMGD, FLFV…AMEE, YLYA…VADG, LLWI…AVQR, LYVL…VHNG, and IYLV…FLPA.

This Homo sapiens (Human) protein is Kelch-like protein 32 (KLHL32).